The sequence spans 222 residues: Probable elongation factor 1-beta (222 aa).

The segment at 90 to 111 is disordered; sequence KPAADDDDDVDLFGSDDEEDEE. Residues 94 to 111 are compositionally biased toward acidic residues; it reads DDDDDVDLFGSDDEEDEE. Serine 104 carries the post-translational modification Phosphoserine.

It belongs to the EF-1-beta/EF-1-delta family. In terms of assembly, EF-1 is composed of 4 subunits: alpha, beta, beta' and gamma. Post-translationally, phosphorylation affects the GDP/GTP exchange rate.

Its function is as follows. EF-1-beta and EF-1-delta stimulate the exchange of GDP bound to EF-1-alpha to GTP. In Drosophila melanogaster (Fruit fly), this protein is Probable elongation factor 1-beta.